Here is a 99-residue protein sequence, read N- to C-terminus: Integration host factor subunit beta (99 aa).

The protein belongs to the bacterial histone-like protein family. In terms of assembly, heterodimer of an alpha and a beta chain.

Its function is as follows. This protein is one of the two subunits of integration host factor, a specific DNA-binding protein that functions in genetic recombination as well as in transcriptional and translational control. In Laribacter hongkongensis (strain HLHK9), this protein is Integration host factor subunit beta.